The chain runs to 920 residues: Nitrate reductase [NADH] (920 aa).

The interval 1 to 69 (MAASVENRQF…DTSDDEEDEA (69 aa)) is disordered. Residues 60-69 (DTSDDEEDEA) show a composition bias toward acidic residues. Cys185 provides a ligand contact to Mo-molybdopterin. The Cytochrome b5 heme-binding domain occupies 534-609 (SLTFTMSEVK…LEEYRVGELI (76 aa)). His569 and His592 together coordinate heme. One can recognise an FAD-binding FR-type domain in the interval 663–775 (REKIPCKLIS…KGPLGHIEYM (113 aa)). FAD-binding positions include 715 to 718 (RAYT), 732 to 736 (LVKIY), Phe737, Phe744, 749 to 751 (LMS), and Thr802.

The protein belongs to the nitrate reductase family. As to quaternary structure, homodimer. FAD serves as cofactor. The cofactor is heme. Requires Mo-molybdopterin as cofactor. As to expression, in cortical cells of roots grown at low nitrate concentrations, in vascular tissues of roots at high nitrate concentrations and in root apex under both conditions.

It carries out the reaction nitrite + NAD(+) + H2O = nitrate + NADH + H(+). Its function is as follows. Nitrate reductase is a key enzyme involved in the first step of nitrate assimilation in plants, fungi and bacteria. This chain is Nitrate reductase [NADH] (NIA), found in Cichorium intybus (Chicory).